The following is a 263-amino-acid chain: L-aspartate dehydrogenase (263 aa).

Ala-120 and Asn-186 together coordinate NAD(+). The active site involves His-216.

The protein belongs to the L-aspartate dehydrogenase family.

The enzyme catalyses L-aspartate + NADP(+) + H2O = oxaloacetate + NH4(+) + NADPH + H(+). It carries out the reaction L-aspartate + NAD(+) + H2O = oxaloacetate + NH4(+) + NADH + H(+). The protein operates within cofactor biosynthesis; NAD(+) biosynthesis; iminoaspartate from L-aspartate (dehydrogenase route): step 1/1. In terms of biological role, specifically catalyzes the NAD or NADP-dependent dehydrogenation of L-aspartate to iminoaspartate. This chain is L-aspartate dehydrogenase, found in Acinetobacter baylyi (strain ATCC 33305 / BD413 / ADP1).